A 138-amino-acid polypeptide reads, in one-letter code: Basic phospholipase A2 canebraxin B (138 aa).

The N-terminal stretch at 1–16 (MRALWIVAVLLVAVEG) is a signal peptide. 7 cysteine pairs are disulfide-bonded: cysteine 42-cysteine 131, cysteine 44-cysteine 60, cysteine 59-cysteine 111, cysteine 65-cysteine 138, cysteine 66-cysteine 104, cysteine 73-cysteine 97, and cysteine 91-cysteine 102. Ca(2+) is bound by residues tyrosine 43, glycine 45, and glycine 47. Histidine 63 is an active-site residue. Aspartate 64 provides a ligand contact to Ca(2+). Aspartate 105 is an active-site residue.

The protein belongs to the phospholipase A2 family. Group II subfamily. In terms of assembly, heterodimer of an acidic subunit and a basic chain. The acidic subunit is non-toxic, without enzymatic activity and comprises 3 peptides that are cross-linked by 7 disulfide bridges. The basic subunit is toxic, has phospholipase A2 activity and is composed of a single chain. It depends on Ca(2+) as a cofactor. As to expression, expressed by the venom gland.

The protein resides in the secreted. It catalyses the reaction a 1,2-diacyl-sn-glycero-3-phosphocholine + H2O = a 1-acyl-sn-glycero-3-phosphocholine + a fatty acid + H(+). Functionally, snake venom phospholipase A2 (PLA2) that shows presynaptic neurotoxicity. PLA2 catalyzes the calcium-dependent hydrolysis of the 2-acyl groups in 3-sn-phosphoglycerides. This Crotalus horridus (Timber rattlesnake) protein is Basic phospholipase A2 canebraxin B.